We begin with the raw amino-acid sequence, 825 residues long: NT-3 growth factor receptor (825 aa).

The first 31 residues, 1–31 (MDVSLCPAKCSFWRIFLLGSVWLDYVGSVLA), serve as a signal peptide directing secretion. Intrachain disulfides connect C32-C38 and C36-C45. The Extracellular portion of the chain corresponds to 32-429 (CPANCVCSKT…TVTHKPEEDT (398 aa)). Residues N68, N72, and N79 are each glycosylated (N-linked (GlcNAc...) asparagine). 2 LRR repeats span residues 104–125 (GLQKLTIKNSGLRSIQPRAFAK) and 128–149 (HLRYINLSSNRLTTLSWQLFQT). N-linked (GlcNAc...) asparagine glycans are attached at residues N133 and N163. Residues 160–209 (NFFNCSCDIRWMQLWQEQGEAKLNSQNLYCINTDGSQLPLFRMNISQCDL) form the LRRCT domain. 2 disulfides stabilise this stretch: C164/C189 and C166/C207. Residues N203, N218, N232, N259, N267, N272, and N294 are each glycosylated (N-linked (GlcNAc...) asparagine). 2 consecutive Ig-like C2-type domains span residues 210–300 (PEIS…VALT) and 309–382 (SLEE…IAKN). A disulfide bond links C231 and C284. Cysteines 320 and 362 form a disulfide. Residues N375 and N388 are each glycosylated (N-linked (GlcNAc...) asparagine). A helical transmembrane segment spans residues 430–453 (FGVSIAVGLAAFACVLLVVLFVMI). Residues 454 to 825 (NKYGRRSKFG…ATPIYLDILG (372 aa)) are Cytoplasmic-facing. Position 493 is a phosphoserine (S493). Residue Y516 is modified to Phosphotyrosine; by autocatalysis. Residues 538 to 825 (IVLKRELGEG…ATPIYLDILG (288 aa)) form the Protein kinase domain. Residues 544–552 (LGEGAFGKV) and K572 contribute to the ATP site. Catalysis depends on D679, which acts as the Proton acceptor. Y705, Y709, and Y710 each carry phosphotyrosine; by autocatalysis.

It belongs to the protein kinase superfamily. Tyr protein kinase family. Insulin receptor subfamily. In terms of assembly, exists in a dynamic equilibrium between monomeric (low affinity) and dimeric (high affinity) structures. Binds SH2B2. Interacts with SQSTM1 and KIDINS220. Interacts with PTPRS. Interacts with MAPK8IP3/JIP3. Ligand-mediated auto-phosphorylation.

Its subcellular location is the membrane. The catalysed reaction is L-tyrosyl-[protein] + ATP = O-phospho-L-tyrosyl-[protein] + ADP + H(+). Receptor tyrosine kinase involved in nervous system and probably heart development. Upon binding of its ligand NTF3/neurotrophin-3, NTRK3 autophosphorylates and activates different signaling pathways, including the phosphatidylinositol 3-kinase/AKT and the MAPK pathways, that control cell survival and differentiation. The chain is NT-3 growth factor receptor (NTRK3) from Pan troglodytes (Chimpanzee).